The sequence spans 416 residues: Glutamyl-tRNA reductase (416 aa).

Residues 50–53 (TCNR), serine 109, 114–116 (EPQ), and glutamine 120 contribute to the substrate site. Cysteine 51 serves as the catalytic Nucleophile. 189-194 (GAGEMI) is a binding site for NADP(+).

It belongs to the glutamyl-tRNA reductase family. As to quaternary structure, homodimer.

The catalysed reaction is (S)-4-amino-5-oxopentanoate + tRNA(Glu) + NADP(+) = L-glutamyl-tRNA(Glu) + NADPH + H(+). Its pathway is porphyrin-containing compound metabolism; protoporphyrin-IX biosynthesis; 5-aminolevulinate from L-glutamyl-tRNA(Glu): step 1/2. Functionally, catalyzes the NADPH-dependent reduction of glutamyl-tRNA(Glu) to glutamate 1-semialdehyde (GSA). The sequence is that of Glutamyl-tRNA reductase from Ruthia magnifica subsp. Calyptogena magnifica.